We begin with the raw amino-acid sequence, 317 residues long: OVARIAN TUMOR DOMAIN-containing deubiquitinating enzyme 4 (317 aa).

An OTU domain is found at Tyr168 to His306. Residue Asp176 is part of the active site. The active-site Nucleophile is the Cys179. His299 is an active-site residue.

The protein belongs to the peptidase C65 family.

The protein resides in the cytoplasm. It catalyses the reaction Thiol-dependent hydrolysis of ester, thioester, amide, peptide and isopeptide bonds formed by the C-terminal Gly of ubiquitin (a 76-residue protein attached to proteins as an intracellular targeting signal).. Functionally, hydrolase that can remove conjugated ubiquitin from proteins in vitro and may therefore play an important regulatory role at the level of protein turnover by preventing degradation. Cysteine protease with a preference for 'Lys-63' over 'Lys-48'-linked over 'Met-1' ubiquitin (UB) tetramers (e.g. Ub3 and Ub4) as substrates. Also cleaves RUB-GST fusion. This Arabidopsis thaliana (Mouse-ear cress) protein is OVARIAN TUMOR DOMAIN-containing deubiquitinating enzyme 4.